The following is a 460-amino-acid chain: Xyloglucan 6-xylosyltransferase 1 (460 aa).

Over 1–20 (MIEKCIGAHRFRRLQRFMRQ) the chain is Cytoplasmic. A helical; Signal-anchor for type II membrane protein membrane pass occupies residues 21–40 (GKVTILCLVLTVIVLRGTIG). Residues 41–460 (AGKFGTPEKD…KAAKLSTTTT (420 aa)) lie on the Lumenal side of the membrane. UDP-alpha-D-xylose-binding positions include glycine 156 and 227–229 (DSD). 2 residues coordinate Mn(2+): aspartate 227 and aspartate 229. Histidine 346 is a binding site for substrate. 3 residues coordinate UDP-alpha-D-xylose: histidine 377, glycine 380, and lysine 382. Histidine 377 contacts Mn(2+). Residues lysine 382 and 389–390 (DY) contribute to the substrate site. Asparagine 431 carries an N-linked (GlcNAc...) asparagine glycan.

The protein belongs to the glycosyltransferase 34 family. Forms homodimer. Interacts with XXT2. It depends on Mn(2+) as a cofactor.

It localises to the golgi apparatus membrane. The catalysed reaction is Transfers an alpha-D-xylosyl residue from UDP-D-xylose to a glucose residue in xyloglucan, forming an alpha-(1-&gt;6)-D-xylosyl-D-glucose linkage.. It participates in protein modification; protein glycosylation. In terms of biological role, xylosyltransferase specific to UDP-D-xylose that accepts both cellopentaose and cellohexaose as substrates, with a better use of cellohexaose, to produce xyloglucan. Adds preferentially the first xylosyl residue to the fourth glucosyl residue from the reducing end of both acceptors. Transfer one xylose mainly to the second glucose residue from the non-reducing end. The acceptor should have a minimum of four glucose residues. The sequence is that of Xyloglucan 6-xylosyltransferase 1 from Arabidopsis thaliana (Mouse-ear cress).